A 448-amino-acid chain; its full sequence is Probable glycine dehydrogenase (decarboxylating) subunit 1 (448 aa).

The protein belongs to the GcvP family. N-terminal subunit subfamily. The glycine cleavage system is composed of four proteins: P, T, L and H. In this organism, the P 'protein' is a heterodimer of two subunits.

The catalysed reaction is N(6)-[(R)-lipoyl]-L-lysyl-[glycine-cleavage complex H protein] + glycine + H(+) = N(6)-[(R)-S(8)-aminomethyldihydrolipoyl]-L-lysyl-[glycine-cleavage complex H protein] + CO2. In terms of biological role, the glycine cleavage system catalyzes the degradation of glycine. The P protein binds the alpha-amino group of glycine through its pyridoxal phosphate cofactor; CO(2) is released and the remaining methylamine moiety is then transferred to the lipoamide cofactor of the H protein. The protein is Probable glycine dehydrogenase (decarboxylating) subunit 1 of Staphylococcus epidermidis (strain ATCC 35984 / DSM 28319 / BCRC 17069 / CCUG 31568 / BM 3577 / RP62A).